Reading from the N-terminus, the 931-residue chain is Ribosome-releasing factor 2, mitochondrial (931 aa).

The tr-type G domain occupies 63–379; sequence EKTRNIGIIA…AVNNLLPGPS (317 aa). GTP-binding positions include 72-79, 162-166, and 216-219; these read AHIDAGKT, DTPGH, and NKLD.

The protein belongs to the TRAFAC class translation factor GTPase superfamily. Classic translation factor GTPase family. EF-G/EF-2 subfamily.

The protein localises to the mitochondrion. Its function is as follows. Mitochondrial GTPase that mediates the disassembly of ribosomes from messenger RNA at the termination of mitochondrial protein biosynthesis. Not involved in the GTP-dependent ribosomal translocation step during translation elongation. In Talaromyces stipitatus (strain ATCC 10500 / CBS 375.48 / QM 6759 / NRRL 1006) (Penicillium stipitatum), this protein is Ribosome-releasing factor 2, mitochondrial (mef2).